The following is a 451-amino-acid chain: Type 3 secretion system ATPase (451 aa).

Residue 184-189 coordinates ATP; sequence GGGKST.

Belongs to the ATPase alpha/beta chains family. T3SS ATPase subfamily. The core secretion machinery of the T3SS is composed of approximately 20 different proteins, including cytoplasmic components, a base, an export apparatus and a needle. This subunit is part of the cytosolic complex. Forms homohexamers.

It is found in the cytoplasm. It catalyses the reaction ATP + H2O + cellular proteinSide 1 = ADP + phosphate + cellular proteinSide 2.. In terms of biological role, ATPase component of the type III secretion system (T3SS), also called injectisome, which is used to inject bacterial effector proteins into eukaryotic host cells. Acts as a molecular motor to provide the energy that is required for the export of proteins. Required for type III secretion apparatus (T3SA) formation, proper protein secretion, host cell invasion and virulence. May play a critical role in T3SS substrate recognition, disassembly of the effector/chaperone complex and unfolding of the effector in an ATP-dependent manner prior to secretion. This chain is Type 3 secretion system ATPase, found in Sinorhizobium fredii (strain NBRC 101917 / NGR234).